We begin with the raw amino-acid sequence, 512 residues long: Pantetheinase (512 aa).

The first 23 residues, 1-23, serve as a signal peptide directing secretion; the sequence is MGMSWWLACAAAFSALCVLKASS. One can recognise a CN hydrolase domain in the interval 32-308; sequence YEHAVILPKD…GKLLFAQLKS (277 aa). The Proton acceptor role is filled by Glu-81. N-linked (GlcNAc...) asparagine glycans are attached at residues Asn-132 and Asn-148. Lys-180 functions as the Proton donor in the catalytic mechanism. The Nucleophile role is filled by Cys-213. 2 N-linked (GlcNAc...) asparagine glycosylation sites follow: Asn-316 and Asn-354. Asn-488 carries GPI-anchor amidated asparagine lipidation. The propeptide at 489–512 is removed in mature form; that stretch reads ASSDFIAHSLIIMLIVTPIIHYLC.

The protein belongs to the carbon-nitrogen hydrolase superfamily. BTD/VNN family. As to quaternary structure, monomer. N-glycosylated. Detected in kidney (at protein level). Ubiquitous.

The protein localises to the cell membrane. The enzyme catalyses (R)-pantetheine + H2O = cysteamine + (R)-pantothenate. In terms of biological role, amidohydrolase that hydrolyzes specifically one of the carboamide linkages in D-pantetheine thus recycling pantothenic acid (vitamin B5) and releasing cysteamine. The polypeptide is Pantetheinase (Vnn1) (Mus musculus (Mouse)).